The sequence spans 985 residues: DNA repair protein REV1 (985 aa).

Positions 161–249 (QSSKIFKNCV…RLLPWQNYSL (89 aa)) constitute a BRCT domain. The segment at 319-329 (YFAHSRLHHLS) is interaction with target DNA. Residues Arg-324 and 362–366 (DFDCF) contribute to the dCTP site. A UmuC domain is found at 358–554 (IFHIDFDCFF…FKLDDLPGVG (197 aa)). Positions 362 and 363 each coordinate Mg(2+). The tract at residues 395–397 (TKN) is interaction with target DNA. DCTP-binding positions include 402 to 408 (SCNYVAR), Asn-414, and Asp-467. Asp-467 and Glu-468 together coordinate Mg(2+). 2 interaction with target DNA regions span residues 554–557 (GHST) and 620–628 (RKSLSIDIN).

The protein belongs to the DNA polymerase type-Y family. Interacts with REV7. It depends on Mg(2+) as a cofactor.

It localises to the nucleus. It is found in the mitochondrion. In terms of biological role, deoxycytidyl transferase involved in DNA repair. Transfers a dCMP residue from dCTP to the 3'-end of a DNA primer in a template-dependent reaction. May assist in the first step in the bypass of abasic lesions by the insertion of a nucleotide opposite the lesion. Required for normal induction of mutations by physical and chemical agents. Involved in mitochondrial DNA mutagenesis. This Saccharomyces cerevisiae (strain ATCC 204508 / S288c) (Baker's yeast) protein is DNA repair protein REV1 (REV1).